Here is a 541-residue protein sequence, read N- to C-terminus: Eukaryotic translation initiation factor 3 subunit E (541 aa).

A PCI domain is found at 252–443 (VEMFLSPVYL…GMVFMNPTHP (192 aa)). The disordered stretch occupies residues 466–541 (AIDRKAHPPS…QQPAQAIAAN (76 aa)). Residues 490–502 (NAGGRGGRGGQRN) show a composition bias toward gly residues. Basic and acidic residues predominate over residues 506-522 (QRDRSHAHNNEAKREGE). Residues 523–541 (SASAEEAQQQQPAQAIAAN) show a composition bias toward low complexity.

The protein belongs to the eIF-3 subunit E family. Component of the eukaryotic translation initiation factor 3 (eIF-3) complex.

It localises to the cytoplasm. Its function is as follows. Component of the eukaryotic translation initiation factor 3 (eIF-3) complex, which is involved in protein synthesis of a specialized repertoire of mRNAs and, together with other initiation factors, stimulates binding of mRNA and methionyl-tRNAi to the 40S ribosome. The eIF-3 complex specifically targets and initiates translation of a subset of mRNAs involved in cell proliferation. The polypeptide is Eukaryotic translation initiation factor 3 subunit E (Mycosarcoma maydis (Corn smut fungus)).